An 86-amino-acid chain; its full sequence is Large ribosomal subunit protein bL27 (86 aa).

This sequence belongs to the bacterial ribosomal protein bL27 family.

This chain is Large ribosomal subunit protein bL27, found in Flavobacterium johnsoniae (strain ATCC 17061 / DSM 2064 / JCM 8514 / BCRC 14874 / CCUG 350202 / NBRC 14942 / NCIMB 11054 / UW101) (Cytophaga johnsonae).